The primary structure comprises 114 residues: Probable 4-amino-4-deoxy-L-arabinose-phosphoundecaprenol flippase subunit ArnE (114 aa).

The EamA domain occupies 39 to 112; sequence RSPWLWLALF…VIGGVALLGQ (74 aa). 3 consecutive transmembrane segments (helical) span residues 41 to 61, 64 to 84, and 91 to 111; these read PWLW…LLVL, LPVS…TLIA, and PVDV…ALLG.

This sequence belongs to the ArnE family. In terms of assembly, heterodimer of ArnE and ArnF.

It is found in the cell inner membrane. It functions in the pathway bacterial outer membrane biogenesis; lipopolysaccharide biosynthesis. In terms of biological role, translocates 4-amino-4-deoxy-L-arabinose-phosphoundecaprenol (alpha-L-Ara4N-phosphoundecaprenol) from the cytoplasmic to the periplasmic side of the inner membrane. The sequence is that of Probable 4-amino-4-deoxy-L-arabinose-phosphoundecaprenol flippase subunit ArnE from Pseudomonas fluorescens (strain Pf0-1).